Reading from the N-terminus, the 455-residue chain is Keratin, type I cuticular Ha5 (455 aa).

Positions 1–97 are head; the sequence is MASKCLKASF…FGEGILTGNE (97 aa). The IF rod domain maps to 97–408; sequence EKETMQFLND…GLLDSEDCKL (312 aa). The interval 98-132 is coil 1A; sequence KETMQFLNDRLASYLEKVRQLERENAELESRIRDW. Residues 133-143 form a linker 1 region; that stretch reads CEQQVPYLCPD. The coil 1B stretch occupies residues 144–244; sequence YQSYFQTIEE…HEEEVNSLRC (101 aa). A linker 12 region spans residues 245–260; sequence QLGDRLNVEVDAAPPV. Positions 261-404 are coil 2; the sequence is DLNRVLNEMR…STYRGLLDSE (144 aa). The interval 405-455 is tail; it reads DCKLPCNPCAPDHSPSKSCLPCLPAASCGPGTAHTTCSPRPICVSCPGSRF.

The protein belongs to the intermediate filament family.

The chain is Keratin, type I cuticular Ha5 from Ovis aries (Sheep).